Here is a 132-residue protein sequence, read N- to C-terminus: Large ribosomal subunit protein bL17 (132 aa).

It belongs to the bacterial ribosomal protein bL17 family. Part of the 50S ribosomal subunit. Contacts protein L32.

This is Large ribosomal subunit protein bL17 from Shewanella woodyi (strain ATCC 51908 / MS32).